A 206-amino-acid chain; its full sequence is MMIDRETQVVDCRCGAGLGKGGGLAQRGTLSEAGRAEVVAIAMSPGQRHITKPVCEITYGMRKENIQVSVLVLYSGSGIPESGMRTGSFVLSPVEVAQIEMHKLAVIHLGNIKDHVVRKTREILSQANIPAIVVSQIPVDFEDFAEAGIKTRLVMPRDEDIRTKGIVMDMVSGVTRGDSCPRDKLNLIIKYVKTTLDQLEDHKGVA.

MCR is composed of three subunits: alpha, beta, and gamma. The function of proteins C and D is not known.

This is Methyl-coenzyme M reductase operon protein C (mcrC) from Methanosarcina barkeri (strain Fusaro / DSM 804).